Consider the following 525-residue polypeptide: GMP synthase [glutamine-hydrolyzing] (525 aa).

Residues R9 to L207 form the Glutamine amidotransferase type-1 domain. The active-site Nucleophile is the C86. Active-site residues include H181 and E183. The GMPS ATP-PPase domain maps to W208–R400. An ATP-binding site is contributed by S235–S241.

In terms of assembly, homodimer.

The catalysed reaction is XMP + L-glutamine + ATP + H2O = GMP + L-glutamate + AMP + diphosphate + 2 H(+). Its pathway is purine metabolism; GMP biosynthesis; GMP from XMP (L-Gln route): step 1/1. Catalyzes the synthesis of GMP from XMP. The chain is GMP synthase [glutamine-hydrolyzing] from Proteus mirabilis (strain HI4320).